Here is a 185-residue protein sequence, read N- to C-terminus: Ribosome-recycling factor (185 aa).

It belongs to the RRF family.

The protein localises to the cytoplasm. Its function is as follows. Responsible for the release of ribosomes from messenger RNA at the termination of protein biosynthesis. May increase the efficiency of translation by recycling ribosomes from one round of translation to another. In Listeria monocytogenes serotype 4a (strain HCC23), this protein is Ribosome-recycling factor.